A 912-amino-acid polypeptide reads, in one-letter code: Protein translocase subunit SecA (912 aa).

ATP-binding positions include glutamine 87, 105 to 109 (GEGKT), and aspartate 509. The segment covering 847–859 (RERAVSQPVHEDA) has biased composition (basic and acidic residues). The disordered stretch occupies residues 847 to 912 (RERAVSQPVH…KYKHCHGKLN (66 aa)). Residues 867 to 878 (AESEEASGESAD) show a composition bias toward acidic residues. The segment covering 881–892 (QPVRRDGPKVGR) has biased composition (basic and acidic residues). Positions 896, 898, 907, and 908 each coordinate Zn(2+). Residues 902-912 (KKYKHCHGKLN) are compositionally biased toward basic residues.

It belongs to the SecA family. In terms of assembly, monomer and homodimer. Part of the essential Sec protein translocation apparatus which comprises SecA, SecYEG and auxiliary proteins SecDF-YajC and YidC. Requires Zn(2+) as cofactor.

It is found in the cell inner membrane. The protein resides in the cytoplasm. It catalyses the reaction ATP + H2O + cellular proteinSide 1 = ADP + phosphate + cellular proteinSide 2.. Its function is as follows. Part of the Sec protein translocase complex. Interacts with the SecYEG preprotein conducting channel. Has a central role in coupling the hydrolysis of ATP to the transfer of proteins into and across the cell membrane, serving both as a receptor for the preprotein-SecB complex and as an ATP-driven molecular motor driving the stepwise translocation of polypeptide chains across the membrane. This is Protein translocase subunit SecA from Chromohalobacter salexigens (strain ATCC BAA-138 / DSM 3043 / CIP 106854 / NCIMB 13768 / 1H11).